The following is a 276-amino-acid chain: 5'-nucleotidase SurE (276 aa).

A divalent metal cation-binding residues include Asp-14, Asp-15, Ser-46, and Asn-104.

It belongs to the SurE nucleotidase family. Requires a divalent metal cation as cofactor.

It localises to the cytoplasm. It catalyses the reaction a ribonucleoside 5'-phosphate + H2O = a ribonucleoside + phosphate. Its function is as follows. Nucleotidase that shows phosphatase activity on nucleoside 5'-monophosphates. The protein is 5'-nucleotidase SurE of Crocosphaera subtropica (strain ATCC 51142 / BH68) (Cyanothece sp. (strain ATCC 51142)).